Reading from the N-terminus, the 408-residue chain is DNA primase DnaG (408 aa).

The Toprim domain occupies 171 to 250 (DAIIIVEGRA…AYSPRGKSVE (80 aa)). Positions 177, 219, and 221 each coordinate Mg(2+). Residues 276–323 (AEENVERLPPSAAPAEVRAPAGAGRTSEGERPPRREWDSKPPSTLGEH) are disordered. Over residues 284–298 (PPSAAPAEVRAPAGA) the composition is skewed to low complexity. Positions 302–314 (SEGERPPRREWDS) are enriched in basic and acidic residues.

It belongs to the archaeal DnaG primase family. In terms of assembly, forms a ternary complex with MCM helicase and DNA. Requires Mg(2+) as cofactor.

The catalysed reaction is ssDNA + n NTP = ssDNA/pppN(pN)n-1 hybrid + (n-1) diphosphate.. RNA polymerase that catalyzes the synthesis of short RNA molecules used as primers for DNA polymerase during DNA replication. The chain is DNA primase DnaG from Methanoculleus marisnigri (strain ATCC 35101 / DSM 1498 / JR1).